The sequence spans 726 residues: Serine/threonine-protein kinase PKH3 (726 aa).

Residues 10–271 (FLFREELGHG…LEQIKKHKWF (262 aa)) enclose the Protein kinase domain. ATP-binding positions include 16 to 24 (LGHGSYSTV) and Lys-39. Catalysis depends on Asp-136, which acts as the Proton acceptor. The segment at 629 to 679 (QDIPLPSPAKSSSNSGVSEPISKIPPRQLVSASEQSHKAKSEAHTKKANSY) is disordered. The segment covering 663 to 673 (QSHKAKSEAHT) has biased composition (basic and acidic residues).

This sequence belongs to the protein kinase superfamily. Ser/Thr protein kinase family.

The catalysed reaction is L-seryl-[protein] + ATP = O-phospho-L-seryl-[protein] + ADP + H(+). The enzyme catalyses L-threonyl-[protein] + ATP = O-phospho-L-threonyl-[protein] + ADP + H(+). Functionally, serine/threonine-protein kinase. This chain is Serine/threonine-protein kinase PKH3 (PKH3), found in Eremothecium gossypii (strain ATCC 10895 / CBS 109.51 / FGSC 9923 / NRRL Y-1056) (Yeast).